Reading from the N-terminus, the 284-residue chain is CUE domain-containing protein 2 (284 aa).

Positions 141-184 (EELPGVDVLLEVFPTCSMEQAQWVLAKARGDLEEAVHMLVEGKE) constitute a CUE domain. A disordered region spans residues 183–204 (KEEGPPGWDGPSQDLPRRLRGP).

Belongs to the CUEDC2 family. In terms of assembly, interacts with PGR and ESR1.

The protein localises to the cytoplasm. Its subcellular location is the nucleus. Its function is as follows. Controls PGR and ESR1 protein levels through their targeting for ubiquitination and subsequent proteasomal degradation. This Mus musculus (Mouse) protein is CUE domain-containing protein 2 (Cuedc2).